The primary structure comprises 265 residues: NAD kinase 2 (265 aa).

Asp-51 functions as the Proton acceptor in the catalytic mechanism. NAD(+)-binding positions include 51-52 (DG), 122-123 (NE), Arg-149, Asp-151, 162-167 (TAYNKS), and Ala-186.

This sequence belongs to the NAD kinase family. It depends on a divalent metal cation as a cofactor.

The protein localises to the cytoplasm. It carries out the reaction NAD(+) + ATP = ADP + NADP(+) + H(+). In terms of biological role, involved in the regulation of the intracellular balance of NAD and NADP, and is a key enzyme in the biosynthesis of NADP. Catalyzes specifically the phosphorylation on 2'-hydroxyl of the adenosine moiety of NAD to yield NADP. The chain is NAD kinase 2 from Bacillus licheniformis (strain ATCC 14580 / DSM 13 / JCM 2505 / CCUG 7422 / NBRC 12200 / NCIMB 9375 / NCTC 10341 / NRRL NRS-1264 / Gibson 46).